The chain runs to 181 residues: Small ribosomal subunit protein uS4 (181 aa).

The 69-residue stretch at 104-172 (RRLQTIVYKK…SRPPVMSQQE (69 aa)) folds into the S4 RNA-binding domain.

This sequence belongs to the universal ribosomal protein uS4 family. In terms of assembly, part of the 30S ribosomal subunit. Contacts protein S5. The interaction surface between S4 and S5 is involved in control of translational fidelity.

In terms of biological role, one of the primary rRNA binding proteins, it binds directly to 16S rRNA where it nucleates assembly of the body of the 30S subunit. With S5 and S12 plays an important role in translational accuracy. This chain is Small ribosomal subunit protein uS4, found in Saccharolobus solfataricus (strain ATCC 35092 / DSM 1617 / JCM 11322 / P2) (Sulfolobus solfataricus).